A 618-amino-acid polypeptide reads, in one-letter code: Glutamine--fructose-6-phosphate aminotransferase [isomerizing] (618 aa).

Cysteine 2 functions as the Nucleophile; for GATase activity in the catalytic mechanism. Positions 2-226 (CGIVGYAGRN…DFETAVLSPT (225 aa)) constitute a Glutamine amidotransferase type-2 domain. Residues 69-94 (HTRWATHGRPSTKNAHPHNSGGNPGK) form a disordered region. SIS domains follow at residues 295-434 (SEDE…VRDR) and 467-608 (CAEG…IDKP). Lysine 613 acts as the For Fru-6P isomerization activity in catalysis.

As to quaternary structure, homodimer.

The protein resides in the cytoplasm. It carries out the reaction D-fructose 6-phosphate + L-glutamine = D-glucosamine 6-phosphate + L-glutamate. Catalyzes the first step in hexosamine metabolism, converting fructose-6P into glucosamine-6P using glutamine as a nitrogen source. This Methanosarcina acetivorans (strain ATCC 35395 / DSM 2834 / JCM 12185 / C2A) protein is Glutamine--fructose-6-phosphate aminotransferase [isomerizing].